Reading from the N-terminus, the 161-residue chain is Cystatin cpi-2 (161 aa).

Positions Met-1–Ala-25 are cleaved as a signal peptide. The short motif at Ser-76–Asp-78 is the Important for interaction with host LGMN element. Asn-89 is a glycosylation site (N-linked (GlcNAc...) asparagine). The Secondary area of contact motif lies at Gln-93–Gly-97. Cys-111 and Cys-124 are oxidised to a cystine.

This sequence belongs to the cystatin family.

Cysteine protease inhibitor which inhibits members of the peptidase C1 family. Also acts as an asparaginyl endopeptidase inhibitor. In the human host, inhibits CTSL/cathepsin L, CTSS/cathepsin S, CTSB/cathepsin B and asparaginyl endopeptidase LGMN/AEP which may cause defects in both antigen and MHC class II invariant chain CD74/Ii processing. This is Cystatin cpi-2 from Brugia malayi (Filarial nematode worm).